The chain runs to 583 residues: MNNRQATTIWSAVLVEELIRQNASMFCISPGSRSTPLTAAVARNPRASWKMFPDERSAGFFALGHARATGRPAVLVCTSGTAVANYFPAVVEASADFVPMIVISADRPFDLQECGANQTIRQDGIFGRYARWHMQLPQPSTEIPLQSLLSTVEHAVAKSLGAPRGPVHLNQPFREPFDPEPLEGQDPWLEPLQAWKLDGRPRTSSAQPERRPDARAMATIRELLATARRPLLIAGSIPSPDDARAVASLADDLRIPLYADLSSGLRLTEGTLAWQQAFATPAFLGRFRPDLVVHFGGRLIARHPSAALKAWKPAHYVVIREHPERYAPDHPVSLSLESSLQTAAEGLMGCRSEPSAIKEPAEGFFLHCSGALDDLTEASIPLSEISAARQISQLITPGEALFTSNSMSVRELDSFAAALQPDGLPCGLNRGASGIDGIISTAAGYGEGLGRKVTLLIGDIAFLHDLNALSLLRSLSRPMRIVLLNNNGGGIFSFLPVASCNDIFEEHFATPQHFHAQHAAGMFGLRYAAPRTNREFEECFLAAGEAPQSTIIEIASSRSENVEQHRTLQARFNAFAETAFTDR.

This sequence belongs to the TPP enzyme family. MenD subfamily. In terms of assembly, homodimer. It depends on Mg(2+) as a cofactor. Mn(2+) is required as a cofactor. Thiamine diphosphate serves as cofactor.

It carries out the reaction isochorismate + 2-oxoglutarate + H(+) = 5-enolpyruvoyl-6-hydroxy-2-succinyl-cyclohex-3-ene-1-carboxylate + CO2. It functions in the pathway quinol/quinone metabolism; 1,4-dihydroxy-2-naphthoate biosynthesis; 1,4-dihydroxy-2-naphthoate from chorismate: step 2/7. Its pathway is quinol/quinone metabolism; menaquinone biosynthesis. Functionally, catalyzes the thiamine diphosphate-dependent decarboxylation of 2-oxoglutarate and the subsequent addition of the resulting succinic semialdehyde-thiamine pyrophosphate anion to isochorismate to yield 2-succinyl-5-enolpyruvyl-6-hydroxy-3-cyclohexene-1-carboxylate (SEPHCHC). This chain is 2-succinyl-5-enolpyruvyl-6-hydroxy-3-cyclohexene-1-carboxylate synthase, found in Chlorobium luteolum (strain DSM 273 / BCRC 81028 / 2530) (Pelodictyon luteolum).